The chain runs to 1481 residues: Cystic fibrosis transmembrane conductance regulator (1481 aa).

Over 1 to 77 (MQRSPLEKAS…KLINALRRCF (77 aa)) the chain is Cytoplasmic. Residues 78 to 98 (FWRFTFYGILLYLGEVTKAVQ) traverse the membrane as a helical segment. Residues 81 to 365 (FTFYGILLYL…WAVQTWYDSL (285 aa)) enclose the ABC transmembrane type-1 1 domain. The Extracellular segment spans residues 99-122 (PLLLGRIIASYDPDNKTERSIAIY). A helical membrane pass occupies residues 123–146 (LGIGLCLLFIVRTLLLHPAIFGLH). The Cytoplasmic segment spans residues 147-195 (HIGMQMRIAMFSLIYKKTLKLSSRVLDKISIGQLVSLLSNNLNKFDEGL). A helical membrane pass occupies residues 196–216 (ALAHFVWIAPLQVALLMGLIW). At 217-222 (ELLQAS) the chain is on the extracellular side. Residues 223-243 (AFCGLGFLIVLALFQAGLGRM) traverse the membrane as a helical segment. Residues 244–298 (MMKYRDQRAGKINERLVITSEMIENIQSVKAYCWEEAMEKMIENLRQTELKLTRK) lie on the Cytoplasmic side of the membrane. Residues 299–319 (AAYVRYFNSSAFFFSGFFVVF) traverse the membrane as a helical segment. The Extracellular segment spans residues 320–339 (LSVLPYALIKGIILRKIFTT). The chain crosses the membrane as a helical span at residues 340-358 (ISFCIVLRMAVTRQFPWAV). Residues 359–858 (QTWYDSLGAI…YLRYITLHKS (500 aa)) are Cytoplasmic-facing. Residues Trp-401, Ser-434, 458–465 (GSTGAGKT), and Gln-493 contribute to the ATP site. Residues 423 to 646 (NDDNNLFFSN…RPDFSSKLMG (224 aa)) enclose the ABC transporter 1 domain. Cys-524 carries S-palmitoyl cysteine lipidation. A phosphoserine mark is found at Ser-549 and Ser-660. Residues 654–831 (SSERRNSILT…EEINEEDLKE (178 aa)) form a disordered R region region. Ser-670 is modified (phosphoserine; by PKA). The residue at position 686 (Ser-686) is a Phosphoserine. Residue Lys-688 forms a Glycyl lysine isopeptide (Lys-Gly) (interchain with G-Cter in ubiquitin) linkage. Residues Ser-700 and Ser-712 each carry the phosphoserine modification. The residue at position 717 (Thr-717) is a Phosphothreonine. 6 positions are modified to phosphoserine: Ser-737, Ser-753, Ser-768, Ser-790, Ser-795, and Ser-813. Residues 859–879 (LIFVLIWCLVIFLAEVAASLV) form a helical membrane-spanning segment. The ABC transmembrane type-1 2 domain maps to 859–1155 (LIFVLIWCLV…AVNSSIDVDS (297 aa)). Residues 880–918 (VLWLLRNTPFQDKGNSTYSRNNSYAVIITNTSSYYVFYI) are Extracellular-facing. Residues Asn-894, Asn-900, and Asn-909 are each glycosylated (N-linked (GlcNAc...) asparagine). A discontinuously helical membrane pass occupies residues 919 to 939 (YVGVADTLLALGFFRGLPLVH). The Cytoplasmic segment spans residues 940–990 (TLITVSKILHHKMLHSVLQAPMSTLNTLKAGGILNRFSKDIAILDDLLPLT). Residues 991–1011 (IFDFIQLLLIVIGAIAVVSVL) traverse the membrane as a helical segment. The Extracellular portion of the chain corresponds to 1012 to 1013 (QP). The helical transmembrane segment at 1014–1034 (YIFLATVPVIAAFVLLRAYFL) threads the bilayer. Topologically, residues 1035-1095 (QTSQQLKQLE…TANWFLYLST (61 aa)) are cytoplasmic. Residues 1096-1116 (LRWFQMRIEMIFVIFFIAVTF) traverse the membrane as a helical segment. Residues 1117–1130 (ISILTTGEGEGTVG) lie on the Extracellular side of the membrane. A helical membrane pass occupies residues 1131–1151 (IILTLAMNIMSTLQWAVNSSI). Residues 1152 to 1481 (DVDSLMRSVS…TEEEVQETRL (330 aa)) are Cytoplasmic-facing. Positions 1211–1444 (MTIKDLTAKY…KSLFRQAISH (234 aa)) constitute an ABC transporter 2 domain. Residues Tyr-1220 and 1245–1252 (GRTGSGKS) each bind ATP. The interaction with GORASP2 stretch occupies residues 1387 to 1481 (RALKQAFADC…TEEEVQETRL (95 aa)). Residue Cys-1396 is the site of S-palmitoyl cysteine attachment. Phosphoserine occurs at positions 1445 and 1457. Positions 1453–1481 (HRNSSKYKSRPQIASLKEETEEEVQETRL) are disordered. Over residues 1471–1481 (ETEEEVQETRL) the composition is skewed to acidic residues. Residues 1479 to 1481 (TRL) carry the PDZ-binding motif.

It belongs to the ABC transporter superfamily. ABCC family. CFTR transporter (TC 3.A.1.202) subfamily. As to quaternary structure, monomer; does not require oligomerization for channel activity. May form oligomers in the membrane. Interacts with SLC26A3, SLC26A6 and NHERF1. Interacts with SHANK2. Interacts with MYO6. Interacts (via C-terminus) with GOPC (via PDZ domain); this promotes CFTR internalization and thereby decreases channel activity. Interacts with SLC4A7 through NHERF1. Found in a complex with MYO5B and RAB11A. Interacts with ANO1. Interacts with SLC26A8. Interacts with AHCYL1; the interaction increases CFTR activity. Interacts with CSE1L. The core-glycosylated form interacts with GORASP2 (via PDZ GRASP-type 1 domain) in respone to ER stress. Interacts with MARCHF2; the interaction leads to CFTR ubiqtuitination and degradation. Interacts with ADGRG2. N-glycosylated. Post-translationally, phosphorylated; cAMP treatment promotes phosphorylation and activates the channel. Dephosphorylation decreases the ATPase activity (in vitro). Phosphorylation at PKA sites activates the channel. Phosphorylation at PKC sites enhances the response to phosphorylation by PKA. Phosphorylated by AMPK; this inhibits channel activity. In terms of processing, ubiquitinated, leading to its degradation in the lysosome. Deubiquitination by USP10 in early endosomes enhances its endocytic recycling to the cell membrane. Ubiquitinated by RNF185 during ER stress. Ubiquitinated by MARCHF2.

The protein localises to the apical cell membrane. Its subcellular location is the early endosome membrane. It is found in the cell membrane. It localises to the recycling endosome membrane. The protein resides in the endoplasmic reticulum membrane. The protein localises to the nucleus. It carries out the reaction ATP + H2O + closed Cl(-) channel = ADP + phosphate + open Cl(-) channel.. It catalyses the reaction chloride(in) = chloride(out). The enzyme catalyses hydrogencarbonate(in) = hydrogencarbonate(out). The catalysed reaction is ATP + H2O = ADP + phosphate + H(+). Functionally, epithelial ion channel that plays an important role in the regulation of epithelial ion and water transport and fluid homeostasis. Mediates the transport of chloride ions across the cell membrane. Possesses an intrinsic ATPase activity and utilizes ATP to gate its channel; the passive flow of anions through the channel is gated by cycles of ATP binding and hydrolysis by the ATP-binding domains. The ion channel is also permeable to HCO(3)(-); selectivity depends on the extracellular chloride concentration. Exerts its function also by modulating the activity of other ion channels and transporters. Contributes to the regulation of the pH and the ion content of the epithelial fluid layer. Modulates the activity of the epithelial sodium channel (ENaC) complex, in part by regulating the cell surface expression of the ENaC complex. May regulate bicarbonate secretion and salvage in epithelial cells by regulating the transporter SLC4A7. Can inhibit the chloride channel activity of ANO1. Plays a role in the chloride and bicarbonate homeostasis during sperm epididymal maturation and capacitation. The protein is Cystic fibrosis transmembrane conductance regulator of Callithrix jacchus (White-tufted-ear marmoset).